The chain runs to 997 residues: Translation initiation factor IF-2 (997 aa).

Residues 101–406 (ELAAEQAAAR…SRNQHQDRRH (306 aa)) form a disordered region. Low complexity-rich tracts occupy residues 116 to 185 (AEAV…QAEP) and 195 to 209 (AAPAQAVAEPVEPAK). Positions 231–242 (TELTSQTPTPVA) are enriched in polar residues. A compositionally biased stretch (low complexity) spans 256 to 280 (AEPAAAPKTTAKPGEIRRAAAPAAP). Residues 281–292 (DRAREEARRAAE) show a composition bias toward basic and acidic residues. Positions 385 to 394 (RAGGKGGRGG) are enriched in gly residues. Positions 498 to 665 (PRAPVVTVMG…NVLLQAEILE (168 aa)) constitute a tr-type G domain. A G1 region spans residues 507 to 514 (GHVDHGKT). 507–514 (GHVDHGKT) lines the GTP pocket. The G2 stretch occupies residues 532-536 (GITQH). Residues 553 to 556 (DTPG) are G3. Residues 553–557 (DTPGH) and 607–610 (NKID) contribute to the GTP site. Residues 607–610 (NKID) are G4. The interval 643–645 (SAK) is G5.

It belongs to the TRAFAC class translation factor GTPase superfamily. Classic translation factor GTPase family. IF-2 subfamily.

Its subcellular location is the cytoplasm. Functionally, one of the essential components for the initiation of protein synthesis. Protects formylmethionyl-tRNA from spontaneous hydrolysis and promotes its binding to the 30S ribosomal subunits. Also involved in the hydrolysis of GTP during the formation of the 70S ribosomal complex. The protein is Translation initiation factor IF-2 of Bordetella pertussis (strain Tohama I / ATCC BAA-589 / NCTC 13251).